The primary structure comprises 161 residues: MDMGGHDMGGMSPPAAGAAAQGGMGAMKSMRYTHMTFFWGKNSEVLFTMWPGTRGGMYALALIFVFALAVIVEFLGSRRADACLAALARRAPAAGGLARAAVHTVRVGVAYLLMLALMSFNGGVFLVAVAGHAAGFLAFRAGLCGGPAQVEEDRKNDPACC.

The next 2 helical transmembrane spans lie at 55–75 (GGMY…VEFL) and 109–129 (VAYL…LVAV).

Belongs to the copper transporter (Ctr) (TC 1.A.56) family. SLC31A subfamily. In terms of assembly, self-interacts. Interacts with SWEET11 and COPT2.

The protein resides in the cell membrane. Involved in the transport of copper, in cooperation with SWEET11 and COPT2. Contributes to the removal of copper (Cu) from xylem, and thus to the sensitivity toward bacterial pathogens such as X.oryzae pv. oryzae (Xoo). The protein is Copper transporter 1 (COPT1) of Oryza sativa subsp. japonica (Rice).